The following is a 233-amino-acid chain: Large ribosomal subunit protein uL1 (233 aa).

This sequence belongs to the universal ribosomal protein uL1 family. Part of the 50S ribosomal subunit.

Its function is as follows. Binds directly to 23S rRNA. The L1 stalk is quite mobile in the ribosome, and is involved in E site tRNA release. Functionally, protein L1 is also a translational repressor protein, it controls the translation of the L11 operon by binding to its mRNA. The protein is Large ribosomal subunit protein uL1 of Deinococcus geothermalis (strain DSM 11300 / CIP 105573 / AG-3a).